We begin with the raw amino-acid sequence, 611 residues long: Glutamine--fructose-6-phosphate aminotransferase [isomerizing] (611 aa).

The Nucleophile; for GATase activity role is filled by C2. The 218-residue stretch at 2–219 (CGIVGAVAER…EGDIAEIRRD (218 aa)) folds into the Glutamine amidotransferase type-2 domain. 2 consecutive SIS domains span residues 287–427 (AAEL…VKGS) and 460–601 (VAEL…VDQP). The For Fru-6P isomerization activity role is filled by K606.

Homodimer.

It is found in the cytoplasm. It catalyses the reaction D-fructose 6-phosphate + L-glutamine = D-glucosamine 6-phosphate + L-glutamate. Its function is as follows. Catalyzes the first step in hexosamine metabolism, converting fructose-6P into glucosamine-6P using glutamine as a nitrogen source. The sequence is that of Glutamine--fructose-6-phosphate aminotransferase [isomerizing] from Pseudomonas syringae pv. tomato (strain ATCC BAA-871 / DC3000).